The following is a 145-amino-acid chain: uncharacterized protein (145 aa).

Residues 97-117 (ISMLLLIVIIAIGLTISYMVI) form a helical membrane-spanning segment.

The protein resides in the membrane. This is an uncharacterized protein from Methanocaldococcus jannaschii (strain ATCC 43067 / DSM 2661 / JAL-1 / JCM 10045 / NBRC 100440) (Methanococcus jannaschii).